The primary structure comprises 171 residues: Small ribosomal subunit protein bS16 (171 aa).

Positions 114 to 171 (EGGPTTEAAKPKKKAATSGAKKAAKAAEPEAAASEAAEPEAAAAPAEGGEQAESSAES) are disordered. Residues 142–171 (PEAAASEAAEPEAAAAPAEGGEQAESSAES) show a composition bias toward low complexity.

It belongs to the bacterial ribosomal protein bS16 family.

This is Small ribosomal subunit protein bS16 from Mycolicibacterium paratuberculosis (strain ATCC BAA-968 / K-10) (Mycobacterium paratuberculosis).